A 319-amino-acid polypeptide reads, in one-letter code: HPr kinase/phosphorylase (319 aa).

Catalysis depends on residues H146 and K167. Residue 161 to 168 participates in ATP binding; it reads GESGLGKS. S168 provides a ligand contact to Mg(2+). The active-site Proton acceptor; for phosphorylation activity. Proton donor; for dephosphorylation activity is the D185. The tract at residues 209–218 is important for the catalytic mechanism of both phosphorylation and dephosphorylation; it reads LEVRGIGLLD. E210 contacts Mg(2+). The active site involves R252. The important for the catalytic mechanism of dephosphorylation stretch occupies residues 273–278; the sequence is QVVAGR.

Belongs to the HPrK/P family. In terms of assembly, homohexamer. Mg(2+) is required as a cofactor.

The catalysed reaction is [HPr protein]-L-serine + ATP = [HPr protein]-O-phospho-L-serine + ADP + H(+). It carries out the reaction [HPr protein]-O-phospho-L-serine + phosphate + H(+) = [HPr protein]-L-serine + diphosphate. Functionally, catalyzes the ATP- as well as the pyrophosphate-dependent phosphorylation of a specific serine residue in HPr, a phosphocarrier protein of the phosphoenolpyruvate-dependent sugar phosphotransferase system (PTS). HprK/P also catalyzes the pyrophosphate-producing, inorganic phosphate-dependent dephosphorylation (phosphorolysis) of seryl-phosphorylated HPr (P-Ser-HPr). This is HPr kinase/phosphorylase from Variovorax paradoxus (strain S110).